A 210-amino-acid polypeptide reads, in one-letter code: Small ribosomal subunit protein uS3 (210 aa).

Positions 17–86 (IDEFLEKELR…NPQIDVQEIK (70 aa)) constitute a KH type-2 domain.

Belongs to the universal ribosomal protein uS3 family. As to quaternary structure, part of the 30S ribosomal subunit.

Binds the lower part of the 30S subunit head. This Pyrococcus abyssi (strain GE5 / Orsay) protein is Small ribosomal subunit protein uS3.